Consider the following 155-residue polypeptide: Transcription antitermination protein NusB (155 aa).

This sequence belongs to the NusB family.

Its function is as follows. Involved in transcription antitermination. Required for transcription of ribosomal RNA (rRNA) genes. Binds specifically to the boxA antiterminator sequence of the ribosomal RNA (rrn) operons. The sequence is that of Transcription antitermination protein NusB from Vibrio vulnificus (strain CMCP6).